The primary structure comprises 268 residues: 3-deoxy-manno-octulosonate cytidylyltransferase (268 aa).

This sequence belongs to the KdsB family.

The protein resides in the cytoplasm. The enzyme catalyses 3-deoxy-alpha-D-manno-oct-2-ulosonate + CTP = CMP-3-deoxy-beta-D-manno-octulosonate + diphosphate. Its pathway is nucleotide-sugar biosynthesis; CMP-3-deoxy-D-manno-octulosonate biosynthesis; CMP-3-deoxy-D-manno-octulosonate from 3-deoxy-D-manno-octulosonate and CTP: step 1/1. It functions in the pathway bacterial outer membrane biogenesis; lipopolysaccharide biosynthesis. In terms of biological role, activates KDO (a required 8-carbon sugar) for incorporation into bacterial lipopolysaccharide in Gram-negative bacteria. The sequence is that of 3-deoxy-manno-octulosonate cytidylyltransferase from Psychrobacter cryohalolentis (strain ATCC BAA-1226 / DSM 17306 / VKM B-2378 / K5).